The primary structure comprises 38 residues: Large ribosomal subunit protein bL36 (38 aa).

The protein belongs to the bacterial ribosomal protein bL36 family.

The chain is Large ribosomal subunit protein bL36 from Hamiltonella defensa subsp. Acyrthosiphon pisum (strain 5AT).